Reading from the N-terminus, the 35-residue chain is MEALVYTFLLVSTLGIIFFAIFFREPPKVPNKKIK.

The helical transmembrane segment at 3–23 threads the bilayer; that stretch reads ALVYTFLLVSTLGIIFFAIFF.

This sequence belongs to the PsbT family. As to quaternary structure, PSII is composed of 1 copy each of membrane proteins PsbA, PsbB, PsbC, PsbD, PsbE, PsbF, PsbH, PsbI, PsbJ, PsbK, PsbL, PsbM, PsbT, PsbY, PsbZ, Psb30/Ycf12, at least 3 peripheral proteins of the oxygen-evolving complex and a large number of cofactors. It forms dimeric complexes.

It localises to the plastid. It is found in the chloroplast thylakoid membrane. Functionally, found at the monomer-monomer interface of the photosystem II (PS II) dimer, plays a role in assembly and dimerization of PSII. PSII is a light-driven water plastoquinone oxidoreductase, using light energy to abstract electrons from H(2)O, generating a proton gradient subsequently used for ATP formation. The polypeptide is Photosystem II reaction center protein T (Amborella trichopoda).